Here is a 431-residue protein sequence, read N- to C-terminus: Serine hydroxymethyltransferase (431 aa).

Residues Leu121 and 125–127 contribute to the (6S)-5,6,7,8-tetrahydrofolate site; that span reads GHL. Lys230 is subject to N6-(pyridoxal phosphate)lysine. Residue 369–371 coordinates (6S)-5,6,7,8-tetrahydrofolate; sequence SPF.

The protein belongs to the SHMT family. As to quaternary structure, homodimer. The cofactor is pyridoxal 5'-phosphate.

The protein resides in the cytoplasm. The catalysed reaction is (6R)-5,10-methylene-5,6,7,8-tetrahydrofolate + glycine + H2O = (6S)-5,6,7,8-tetrahydrofolate + L-serine. Its pathway is one-carbon metabolism; tetrahydrofolate interconversion. It participates in amino-acid biosynthesis; glycine biosynthesis; glycine from L-serine: step 1/1. Functionally, catalyzes the reversible interconversion of serine and glycine with tetrahydrofolate (THF) serving as the one-carbon carrier. This reaction serves as the major source of one-carbon groups required for the biosynthesis of purines, thymidylate, methionine, and other important biomolecules. Also exhibits THF-independent aldolase activity toward beta-hydroxyamino acids, producing glycine and aldehydes, via a retro-aldol mechanism. The sequence is that of Serine hydroxymethyltransferase from Cytophaga hutchinsonii (strain ATCC 33406 / DSM 1761 / CIP 103989 / NBRC 15051 / NCIMB 9469 / D465).